The chain runs to 157 residues: Transcription elongation factor GreA (157 aa).

This sequence belongs to the GreA/GreB family.

Functionally, necessary for efficient RNA polymerase transcription elongation past template-encoded arresting sites. The arresting sites in DNA have the property of trapping a certain fraction of elongating RNA polymerases that pass through, resulting in locked ternary complexes. Cleavage of the nascent transcript by cleavage factors such as GreA or GreB allows the resumption of elongation from the new 3'terminus. GreA releases sequences of 2 to 3 nucleotides. The sequence is that of Transcription elongation factor GreA from Chelativorans sp. (strain BNC1).